We begin with the raw amino-acid sequence, 751 residues long: Photosystem I P700 chlorophyll a apoprotein A1 (751 aa).

The next 8 helical transmembrane spans lie at V73–A96, L159–H182, L198–L222, T294–Y312, W349–Y372, L388–V414, A436–H458, and F533–L551. The [4Fe-4S] cluster site is built by C575 and C584. 2 consecutive transmembrane segments (helical) span residues H591 to W612 and L665 to F687. Residue H676 coordinates chlorophyll a'. Positions 684 and 692 each coordinate chlorophyll a. Phylloquinone is bound at residue W693. The helical transmembrane segment at A725 to A745 threads the bilayer.

It belongs to the PsaA/PsaB family. The PsaA/B heterodimer binds the P700 chlorophyll special pair and subsequent electron acceptors. PSI consists of a core antenna complex that captures photons, and an electron transfer chain that converts photonic excitation into a charge separation. The eukaryotic PSI reaction center is composed of at least 11 subunits. The cofactor is P700 is a chlorophyll a/chlorophyll a' dimer, A0 is one or more chlorophyll a, A1 is one or both phylloquinones and FX is a shared 4Fe-4S iron-sulfur center..

The protein resides in the plastid. It localises to the chloroplast thylakoid membrane. The catalysed reaction is reduced [plastocyanin] + hnu + oxidized [2Fe-2S]-[ferredoxin] = oxidized [plastocyanin] + reduced [2Fe-2S]-[ferredoxin]. Its function is as follows. PsaA and PsaB bind P700, the primary electron donor of photosystem I (PSI), as well as the electron acceptors A0, A1 and FX. PSI is a plastocyanin/cytochrome c6-ferredoxin oxidoreductase, converting photonic excitation into a charge separation, which transfers an electron from the donor P700 chlorophyll pair to the spectroscopically characterized acceptors A0, A1, FX, FA and FB in turn. Oxidized P700 is reduced on the lumenal side of the thylakoid membrane by plastocyanin or cytochrome c6. This Chlorella vulgaris (Green alga) protein is Photosystem I P700 chlorophyll a apoprotein A1.